The sequence spans 256 residues: Small ribosomal subunit protein eS1 (256 aa).

Alanine 2 is subject to N-acetylalanine; partial.

Belongs to the eukaryotic ribosomal protein eS1 family. As to quaternary structure, component of the small ribosomal subunit. Mature ribosomes consist of a small (40S) and a large (60S) subunit. The 40S subunit contains about 33 different proteins and 1 molecule of RNA (18S). The 60S subunit contains about 49 different proteins and 3 molecules of RNA (25S, 5.8S and 5S).

The protein resides in the cytoplasm. This is Small ribosomal subunit protein eS1 from Meyerozyma guilliermondii (strain ATCC 6260 / CBS 566 / DSM 6381 / JCM 1539 / NBRC 10279 / NRRL Y-324) (Yeast).